The sequence spans 193 residues: MNNLRNRLSGVNGKNKRVKEKEQKIWSEIGMIAGAFALLDVIIRGIMFEFPFKEWAASLVFLFIIILYYCIRAAASGMLMPRIDTKEELQKRVKQQRIESIAVAFAVVVLTMYDRGIPHTFFAWLKMILLFIVCGGVLFLLRYVIVKLAYRRAVKEEIKKKSSFLFGKRGKRSQFRAAFFIGTLICIHSAKLF.

This is an uncharacterized protein from Bacillus subtilis (strain 168).